The primary structure comprises 233 residues: Large ribosomal subunit protein bL25 (233 aa).

The disordered stretch occupies residues 1 to 23 (MATVRELKATARPKSGKGAARAE).

Belongs to the bacterial ribosomal protein bL25 family. CTC subfamily. In terms of assembly, part of the 50S ribosomal subunit; part of the 5S rRNA/L5/L18/L25 subcomplex. Contacts the 5S rRNA. Binds to the 5S rRNA independently of L5 and L18.

Functionally, this is one of the proteins that binds to the 5S RNA in the ribosome where it forms part of the central protuberance. This is Large ribosomal subunit protein bL25 from Nitrobacter hamburgensis (strain DSM 10229 / NCIMB 13809 / X14).